The following is a 311-amino-acid chain: Ribosomal RNA small subunit methyltransferase H (311 aa).

S-adenosyl-L-methionine is bound by residues 34–36, aspartate 54, phenylalanine 80, aspartate 104, and glutamine 111; that span reads GGH.

This sequence belongs to the methyltransferase superfamily. RsmH family.

It is found in the cytoplasm. It catalyses the reaction cytidine(1402) in 16S rRNA + S-adenosyl-L-methionine = N(4)-methylcytidine(1402) in 16S rRNA + S-adenosyl-L-homocysteine + H(+). Its function is as follows. Specifically methylates the N4 position of cytidine in position 1402 (C1402) of 16S rRNA. This chain is Ribosomal RNA small subunit methyltransferase H, found in Teredinibacter turnerae (strain ATCC 39867 / T7901).